The chain runs to 110 residues: UPF0122 protein SMU_1061 (110 aa).

Belongs to the UPF0122 family.

In terms of biological role, might take part in the signal recognition particle (SRP) pathway. This is inferred from the conservation of its genetic proximity to ftsY/ffh. May be a regulatory protein. The sequence is that of UPF0122 protein SMU_1061 (ylxM) from Streptococcus mutans serotype c (strain ATCC 700610 / UA159).